The sequence spans 832 residues: WD repeat-containing protein 75 (832 aa).

13 WD repeats span residues 4-43 (QCQI…KVYS), 47-86 (EECI…KLWD), 90-131 (GILI…QLVS), 145-184 (KEIS…YYFK), 193-230 (LKAT…RLWR), 236-275 (KEYT…VQWP), 278-317 (SEEK…SIID), 323-361 (SGII…QFYS), 375-424 (QQEF…KLWE), 431-477 (SFVL…KVWM), 490-528 (SWLC…TVWE), 532-572 (WDLK…CCWN), and 577-614 (ALEW…FLFQ). A disordered region spans residues 764–798 (SQSTEESKEDEEMKSEHSEADSSDETEEMESQKRF).

Component of the proposed t-UTP subcomplex of the ribosomal small subunit (SSU) processome. SSU processome is composed of more than 70 proteins and the RNA chaperone small nucleolar RNA (snoRNA) U3.

The protein localises to the nucleus. It is found in the nucleolus. Its function is as follows. Ribosome biogenesis factor. Part of the small subunit (SSU) processome, first precursor of the small eukaryotic ribosomal subunit. During the assembly of the SSU processome in the nucleolus, many ribosome biogenesis factors, an RNA chaperone and ribosomal proteins associate with the nascent pre-rRNA and work in concert to generate RNA folding, modifications, rearrangements and cleavage as well as targeted degradation of pre-ribosomal RNA by the RNA exosome. Involved in nucleolar processing of pre-18S ribosomal RNA. Required for optimal pre-ribosomal RNA transcription by RNA polymerase I. The sequence is that of WD repeat-containing protein 75 (wdr75) from Xenopus laevis (African clawed frog).